The sequence spans 560 residues: Endogenous retrovirus group K member 18 Env polyprotein (560 aa).

A fusion peptide region spans residues 355 to 375 (FIFTLIAVIMGLIAVTATAAV). Residues 522–542 (IRSTMIINLILIVVCLFCLLL) traverse the membrane as a helical segment.

This sequence belongs to the beta type-B retroviral envelope protein family. HERV class-II K(HML-2) env subfamily. As to quaternary structure, the surface (SU) and transmembrane (TM) proteins form a heterodimer. SU and TM are attached by noncovalent interactions or by a labile interchain disulfide bond. Post-translationally, specific enzymatic cleavages in vivo yield the mature SU and TM proteins. Expressed at higher level in the thymus. Expressed at lower level in peripheral blood lymphocytes.

Its subcellular location is the cell membrane. It is found in the virion. Retroviral envelope proteins mediate receptor recognition and membrane fusion during early infection. Endogenous envelope proteins may have kept, lost or modified their original function during evolution. This envelope protein has superantigenic properties. Its function is as follows. SU mediates receptor recognition. Functionally, TM anchors the envelope heterodimer to the viral membrane through one transmembrane domain. The other hydrophobic domain, called fusion peptide, mediates fusion of the viral membrane with the target cell membrane. The chain is Endogenous retrovirus group K member 18 Env polyprotein (ERVK-18) from Homo sapiens (Human).